The sequence spans 941 residues: Glycine dehydrogenase (decarboxylating) (941 aa).

N6-(pyridoxal phosphate)lysine is present on Lys692.

It belongs to the GcvP family. In terms of assembly, the glycine cleavage system is composed of four proteins: P, T, L and H. Requires pyridoxal 5'-phosphate as cofactor.

The enzyme catalyses N(6)-[(R)-lipoyl]-L-lysyl-[glycine-cleavage complex H protein] + glycine + H(+) = N(6)-[(R)-S(8)-aminomethyldihydrolipoyl]-L-lysyl-[glycine-cleavage complex H protein] + CO2. Its function is as follows. The glycine cleavage system catalyzes the degradation of glycine. The P protein binds the alpha-amino group of glycine through its pyridoxal phosphate cofactor; CO(2) is released and the remaining methylamine moiety is then transferred to the lipoamide cofactor of the H protein. This Mycobacterium tuberculosis (strain ATCC 25177 / H37Ra) protein is Glycine dehydrogenase (decarboxylating).